A 485-amino-acid chain; its full sequence is MLNKLTHGVFTYRASLTAMLSSSTSAGLSSSFVSSRFLSSGIFSSGASRNRVTFPVQFHRASAVRCFASSGGSDRIQVQNPIVEMDGDEMTRVIWSMIKEKLILPYLDLDIKYFDLGILNRDATDDKVTVESAEAALKYNVAIKCATITPDEGRVKEFGLKSMWRSPNGTIRNILDGTVFREPIMCSNIPRLVPGWEKPICIGRHAFGDQYRATDTVIKGPGKLKMVFVPEDGNAPVELDVYDFKGPGVALAMYNVDESIRAFAESSMAMALTKKWPLYLSTKNTILKKYDGRFKDIFQEVYEANWKQKFEEHSIWYEHRLIDDMVAYAVKSEGGYVWACKNYDGDVQSDLLAQGFGSLGLMTSVLLSADGKTLESEAAHGTVTRHFRLHQKGQETSTNSIASIFAWTRGLEHRAKLDKNEKLMDFVKKLESSCVNTVETGKMTKDLALLIHGPKVSRDLFLNTEEFIDAVASKLKTQFKELPLV.

Residues 1–65 constitute a chloroplast and mitochondrion transit peptide; the sequence is MLNKLTHGVF…VQFHRASAVR (65 aa). NADP(+)-binding positions include 147-149 and arginine 154; that span reads TIT. Threonine 149 lines the substrate pocket. Substrate-binding positions include 166–172, arginine 181, and arginine 204; that span reads SPNGTIR. Residue aspartate 323 coordinates Mn(2+). Lysine 331 contributes to the NADP(+) binding site. Aspartate 346 contributes to the Mn(2+) binding site. Residues 381–386 and asparagine 399 contribute to the NADP(+) site; that span reads GTVTRH.

This sequence belongs to the isocitrate and isopropylmalate dehydrogenases family. It depends on Mg(2+) as a cofactor. Mn(2+) is required as a cofactor.

The protein localises to the plastid. It localises to the chloroplast. It is found in the mitochondrion. The enzyme catalyses D-threo-isocitrate + NADP(+) = 2-oxoglutarate + CO2 + NADPH. Its function is as follows. May be involved in response to oxidative stresses. In Arabidopsis thaliana (Mouse-ear cress), this protein is Isocitrate dehydrogenase [NADP], chloroplastic/mitochondrial.